We begin with the raw amino-acid sequence, 51 residues long: MWYFSWLLGLPLAAAFAVLNAMWYELMDDRARKRLAADPTAELALEGNKHH.

At Met-1 to Tyr-3 the chain is on the cytoplasmic side. The chain crosses the membrane as a helical span at residues Phe-4–Leu-26. The Periplasmic portion of the chain corresponds to Met-27–His-51.

It belongs to the cytochrome ubiquinol oxidase subunit X family. May be a subunit of cytochrome ubiquinol oxidase.

The protein localises to the cell inner membrane. It carries out the reaction 2 a ubiquinol + O2(in) + 4 H(+)(in) = 2 a ubiquinone + 2 H2O(in) + 4 H(+)(out). Its pathway is energy metabolism; oxidative phosphorylation. Functionally, required for correct functioning of cytochrome bd oxidase. The polypeptide is Cytochrome bd ubiquinol oxidase subunit X (cydX) (Brucella abortus (strain 2308)).